Consider the following 888-residue polypeptide: Pumilio homology domain family member 4 (888 aa).

Phosphothreonine occurs at positions 205, 212, and 252. 2 disordered regions span residues 236 to 270 and 467 to 551; these read KAKK…IPPT and MNSA…RKIE. A compositionally biased stretch (polar residues) spans 243 to 270; that stretch reads GANNTAKTRTQSISFDNTPSSTSFIPPT. Ser256 carries the phosphoserine modification. 2 stretches are compositionally biased toward low complexity: residues 478-499 and 521-543; these read NNNS…YNNK and NNNN…NSNS. The PUM-HD domain maps to 539–888; the sequence is TNSNSAEKQR…RIIGMLHLDS (350 aa). 8 Pumilio repeats span residues 563 to 598, 599 to 634, 635 to 671, 672 to 707, 708 to 743, 744 to 783, 784 to 821, and 823 to 861; these read QYIG…AIFE, ETKD…VLTK, ISSP…IVVD, SLRP…FIFD, AISD…NLCD, KLLA…KIVH, LLKP…EILN, and GGET…RLSE.

Functionally, is not essential for haploid growth, but may affect diploid formation. The sequence is that of Pumilio homology domain family member 4 (PUF4) from Saccharomyces cerevisiae (strain ATCC 204508 / S288c) (Baker's yeast).